The following is a 980-amino-acid chain: SLIT and NTRK-like protein 3 (980 aa).

An N-terminal signal peptide occupies residues 1–27 (MMKPSIAEMLHRGRMLWIILLSTIALG). Topologically, residues 30–655 (TPIPLIEDSE…SPPGGPVPLS (626 aa)) are extracellular. Residue asparagine 69 is glycosylated (N-linked (GlcNAc...) asparagine). 6 LRR repeats span residues 79–100 (RPFKLYLQRNSMRRLYTNSFLH), 103–124 (NAVSINLGNNALQDIQTGAFNG), 127–148 (ILKRLYLHENKLDVFRNDTFLG), 151–172 (SLEYLQADYNVIKRIESGAFRN), 175–196 (KLRVLILNDNLIPVLPTNLFKA), and 198–219 (SLTHLDLRGNRLKVLFYRGMLD). The LRRCT 1 domain occupies 233–284 (NPWNCTCEIVQLKSWLERIPYTALVGDITCETPFHFHGKDLREIKKTELCPL). Positions 326–361 (EYKSSNKQPKPTKQPRTPRPPSTSQALYPGPNQPPI) are disordered. One can recognise an LRRNT domain in the interval 365–407 (QTRPPIPIICPTGCTCNLHINDLGLTVNCKERGFNNISELLPR). LRR repeat units lie at residues 410–431 (NAKKLYLSSNLIQKIYRSDFWN), 434–455 (SLDLLHLGNNRISYVQDGAFIN), 458–479 (NLKSLFLNGNDIEKLTPGMFRG), 482–503 (SLHYLYFEFNVIREIQPAAFSL), 506–527 (NLKLLFLNNNLLRTLPTDAFAG), and 529–550 (SLARLNLRKNYFLYLPVAGVLE). The LRRCT 2 domain occupies 563-614 (NPWDCTCDLVPFKQWIETISSVSVVGDVLCRTPENLTHRDVRTIELEVLCPE). N-linked (GlcNAc...) asparagine glycosylation occurs at asparagine 597. The interval 622 to 644 (GPSPPQPGDYHPNGGPTSASPYE) is disordered. The chain crosses the membrane as a helical span at residues 656–676 (VLILSLLVLFFSAVFVAAGLF). Topologically, residues 677–980 (AYVLRRRRKK…EVLEKTAYRF (304 aa)) are cytoplasmic. Disordered stretches follow at residues 709 to 735 (LFEDSGGNSGGSGGGGRPTLSSPEKAP) and 762 to 785 (EEEVAASAAQDTGATDRGGPGTQP). A compositionally biased stretch (gly residues) spans 715 to 725 (GNSGGSGGGGR).

This sequence belongs to the SLITRK family. Broadly expressed in embryonic brain with highest expression in cortical plate, pyramidal cell layer of the hippocampus, thalamus and hypothalamus.

It localises to the membrane. Its function is as follows. Suppresses neurite outgrowth. The protein is SLIT and NTRK-like protein 3 (Slitrk3) of Mus musculus (Mouse).